We begin with the raw amino-acid sequence, 456 residues long: MTOR-associated protein MEAK7 (456 aa).

A lipid anchor (N-myristoyl glycine) is attached at glycine 2. The 169-residue stretch at 244–412 (SILDVLSVMY…FDKMEVWAVG (169 aa)) folds into the TLDc domain.

As to quaternary structure, interacts (via C-terminal domain) with MTOR and MLST8; the interaction with MTOR increases upon nutrient stimulation.

The protein resides in the membrane. The protein localises to the cytoplasm. It is found in the lysosome. In terms of biological role, activates an alternative mTOR signaling through RPS6KB2 activation and EIF4EBP1 repression to regulate cell proliferation and migration. Recruits MTOR at the lysosome, essential for MTOR signaling at the lysosome. The chain is MTOR-associated protein MEAK7 from Homo sapiens (Human).